We begin with the raw amino-acid sequence, 256 residues long: Imidazole glycerol phosphate synthase subunit HisF (256 aa).

Residues Asp-12 and Asp-131 contribute to the active site.

It belongs to the HisA/HisF family. Heterodimer of HisH and HisF.

The protein resides in the cytoplasm. The catalysed reaction is 5-[(5-phospho-1-deoxy-D-ribulos-1-ylimino)methylamino]-1-(5-phospho-beta-D-ribosyl)imidazole-4-carboxamide + L-glutamine = D-erythro-1-(imidazol-4-yl)glycerol 3-phosphate + 5-amino-1-(5-phospho-beta-D-ribosyl)imidazole-4-carboxamide + L-glutamate + H(+). Its pathway is amino-acid biosynthesis; L-histidine biosynthesis; L-histidine from 5-phospho-alpha-D-ribose 1-diphosphate: step 5/9. Its function is as follows. IGPS catalyzes the conversion of PRFAR and glutamine to IGP, AICAR and glutamate. The HisF subunit catalyzes the cyclization activity that produces IGP and AICAR from PRFAR using the ammonia provided by the HisH subunit. This chain is Imidazole glycerol phosphate synthase subunit HisF, found in Pseudomonas entomophila (strain L48).